The sequence spans 308 residues: Methionyl-tRNA formyltransferase (308 aa).

Position 109 to 112 (109 to 112 (SLLP)) interacts with (6S)-5,6,7,8-tetrahydrofolate.

The protein belongs to the Fmt family.

It carries out the reaction L-methionyl-tRNA(fMet) + (6R)-10-formyltetrahydrofolate = N-formyl-L-methionyl-tRNA(fMet) + (6S)-5,6,7,8-tetrahydrofolate + H(+). Attaches a formyl group to the free amino group of methionyl-tRNA(fMet). The formyl group appears to play a dual role in the initiator identity of N-formylmethionyl-tRNA by promoting its recognition by IF2 and preventing the misappropriation of this tRNA by the elongation apparatus. This chain is Methionyl-tRNA formyltransferase, found in Caulobacter vibrioides (strain NA1000 / CB15N) (Caulobacter crescentus).